A 65-amino-acid polypeptide reads, in one-letter code: Movement protein TGBp3 (65 aa).

The Lumenal segment spans residues 1-6 (MLPKMQ). Residues 7–26 (PSAQCLIVFSLAFVLGWYVL) traverse the membrane as a helical segment. The Cytoplasmic segment spans residues 27–65 (RPGNTSCVLLITGESVRLVNCELTKDLVEAVLLRPLKHL).

It belongs to the Tymovirales TGBp3 protein family.

Its subcellular location is the host endoplasmic reticulum membrane. Plays a role in viral cell-to-cell propagation, by facilitating genome transport to neighboring plant cells through plasmosdesmata. May induce the formation of granular vesicles derived from the Endoplasmic reticulum, which align on actin filaments. This is Movement protein TGBp3 from Potato virus S (strain Peruvian).